The chain runs to 109 residues: Nucleoid-associated protein BCB4264_A0025 (109 aa).

It belongs to the YbaB/EbfC family. As to quaternary structure, homodimer.

It localises to the cytoplasm. The protein localises to the nucleoid. Its function is as follows. Binds to DNA and alters its conformation. May be involved in regulation of gene expression, nucleoid organization and DNA protection. The chain is Nucleoid-associated protein BCB4264_A0025 from Bacillus cereus (strain B4264).